Consider the following 367-residue polypeptide: Uracil nucleotide/cysteinyl leukotriene receptor (367 aa).

Residues 1-28 are disordered; sequence MSKRSWWAGSRKPPREMLKLSGSDSSQS. At 1 to 64 the chain is on the extracellular side; that stretch reads MSKRSWWAGS…TPLENMLFAS (64 aa). Asn42 is a glycosylation site (N-linked (GlcNAc...) asparagine). A helical transmembrane segment spans residues 65-85; the sequence is FYLLDFILALVGNTLALWLFI. The Cytoplasmic segment spans residues 86-92; the sequence is RDHKSGT. Residues 93–113 traverse the membrane as a helical segment; the sequence is PANVFLMHLAVADLSCVLVLP. The Extracellular portion of the chain corresponds to 114–133; that stretch reads TRLVYHFSGNHWPFGEIACR. An intrachain disulfide couples Cys132 to Cys209. Residues 134–154 form a helical membrane-spanning segment; sequence LTGFLFYLNMYASIYFLTCIS. At 155–175 the chain is on the cytoplasmic side; the sequence is ADRFLAIVHPVKSLKLRRPLY. Residues 176–196 form a helical membrane-spanning segment; sequence AHLACAFLWVVVAVAMAPLLV. Residues 197–223 are Extracellular-facing; sequence SPQTVQTNHTVVCLQLYREKASHHALV. N-linked (GlcNAc...) asparagine glycosylation occurs at Asn204. The helical transmembrane segment at 224–244 threads the bilayer; that stretch reads SLAVAFTFPFITTVTCYLLII. Residues 245–260 lie on the Cytoplasmic side of the membrane; it reads RSLRQGLRVEKRLKTK. A helical transmembrane segment spans residues 261–281; sequence AVRMIAIVLAIFLVCFVPYHV. N-linked (GlcNAc...) asparagine glycosylation is present at Asn282. The Extracellular segment spans residues 282 to 308; that stretch reads NRSVYVLHYRSHGASCATQRILALANR. Residues 309–329 traverse the membrane as a helical segment; the sequence is ITSCLTSLNGALDPIMYFFVA. Residues 330 to 367 are Cytoplasmic-facing; that stretch reads EKFRHALCNLLCGKRLKGPPPSFEGKTNESSLSAKSEL.

Belongs to the G-protein coupled receptor 1 family. As to expression, expressed in brain, kidney, heart and umbilical vein endothelial cells. Highest level in brain.

The protein localises to the cell membrane. In terms of biological role, dual specificity receptor for uracil nucleotides and cysteinyl leukotrienes (CysLTs). Signals through G(i) and inhibition of adenylyl cyclase. May mediate brain damage by nucleotides and CysLTs following ischemia. The sequence is that of Uracil nucleotide/cysteinyl leukotriene receptor (GPR17) from Homo sapiens (Human).